A 97-amino-acid polypeptide reads, in one-letter code: RNA-binding protein Hfq (97 aa).

The Sm domain maps to 10 to 70; it reads DPFLNALRKE…ISTIVPARSV (61 aa).

The protein belongs to the Hfq family. In terms of assembly, homohexamer.

Its function is as follows. RNA chaperone that binds small regulatory RNA (sRNAs) and mRNAs to facilitate mRNA translational regulation in response to envelope stress, environmental stress and changes in metabolite concentrations. Also binds with high specificity to tRNAs. This Neisseria gonorrhoeae (strain ATCC 700825 / FA 1090) protein is RNA-binding protein Hfq.